Reading from the N-terminus, the 230-residue chain is MRKAGLWGLLCVFFVSEVKAAIVLEEERYDLVEGQTLTVKCPFNIMKYANSQKAWQRLPDGKEPLTLVVTQRPFTRPSEVHMGKFTLKHDPSEAMLQVQMTDLQVTDSGLYRCVIYHPPNDPVVLFHPVRLVVTKGSSDVFTPVIIPITRLTERPILITTKYSPSDTTTTRSLPKPTAVVSSPGLGVTIINGTDADSVSTSSVTISVICGLLSKSLVFIILFIVTKRTFG.

The N-terminal stretch at 1-20 (MRKAGLWGLLCVFFVSEVKA) is a signal peptide. The Ig-like V-type domain maps to 21–124 (AIVLEEERYD…IYHPPNDPVV (104 aa)). Residues 21-202 (AIVLEEERYD…TDADSVSTSS (182 aa)) lie on the Extracellular side of the membrane. A disulfide bond links Cys41 and Cys113. N-linked (GlcNAc...) asparagine glycosylation is present at Asn191. Residues 203–223 (VTISVICGLLSKSLVFIILFI) traverse the membrane as a helical segment. The Cytoplasmic segment spans residues 224 to 230 (VTKRTFG).

Monomer. Homomultimer; when activated. Interacts with TYROBP/DAP12. Interacts with TLR4.

Its subcellular location is the cell membrane. Cell surface receptor that plays important roles in innate and adaptive immunity by amplifying inflammatory responses. Upon activation by various ligands such as PGLYRP1, HMGB1 or HSP70, multimerizes and forms a complex with transmembrane adapter TYROBP/DAP12. In turn, initiates a SYK-mediated cascade of tyrosine phosphorylation, activating multiple downstream mediators such as BTK, MAPK1, MAPK3 or phospholipase C-gamma. This cascade promotes the neutrophil- and macrophage-mediated release of pro-inflammatory cytokines and/or chemokines, as well as their migration and thereby amplifies inflammatory responses that are triggered by bacterial and fungal infections. By also promoting the amplification of inflammatory signals that are initially triggered by Toll-like receptor (TLR) and NOD-like receptor engagement, plays a major role in the pathophysiology of acute and chronic inflammatory diseases of different etiologies including septic shock and atherosclerosis. This chain is Triggering receptor expressed on myeloid cells 1 (Trem1), found in Mus musculus (Mouse).